The following is a 599-amino-acid chain: Elongation factor 4 (599 aa).

Residues S4–K186 form the tr-type G domain. GTP contacts are provided by residues D16–T21 and N133–D136.

Belongs to the TRAFAC class translation factor GTPase superfamily. Classic translation factor GTPase family. LepA subfamily.

The protein localises to the cell inner membrane. It carries out the reaction GTP + H2O = GDP + phosphate + H(+). Required for accurate and efficient protein synthesis under certain stress conditions. May act as a fidelity factor of the translation reaction, by catalyzing a one-codon backward translocation of tRNAs on improperly translocated ribosomes. Back-translocation proceeds from a post-translocation (POST) complex to a pre-translocation (PRE) complex, thus giving elongation factor G a second chance to translocate the tRNAs correctly. Binds to ribosomes in a GTP-dependent manner. The sequence is that of Elongation factor 4 from Syntrophotalea carbinolica (strain DSM 2380 / NBRC 103641 / GraBd1) (Pelobacter carbinolicus).